The primary structure comprises 115 residues: Large ribosomal subunit protein P2 (115 aa).

Met1 is subject to N-acetylmethionine. The residue at position 19 (Ser19) is a Phosphoserine. An N6-acetyllysine; alternate modification is found at Lys21. Residue Lys21 is modified to N6-succinyllysine; alternate. The segment covering 76-90 (APGSAAPAAGSAPAA) has biased composition (low complexity). The interval 76 to 115 (APGSAAPAAGSAPAAAEEKKDEKKEESEESDDDMGFGLFD) is disordered. Phosphoserine occurs at positions 79 and 86. Residues 91–101 (AEEKKDEKKEE) are compositionally biased toward basic and acidic residues. Ser102 and Ser105 each carry phosphoserine.

The protein belongs to the eukaryotic ribosomal protein P1/P2 family. In terms of assembly, heterodimer with RPLP1 at the lateral ribosomal stalk of the large ribosomal subunit.

Its function is as follows. Plays an important role in the elongation step of protein synthesis. This is Large ribosomal subunit protein P2 (Rplp2) from Rattus norvegicus (Rat).